The following is a 162-amino-acid chain: Cyclic pyranopterin monophosphate synthase (162 aa).

Residues 75–77 (LCH) and 113–114 (ME) each bind substrate. Residue Asp128 is part of the active site.

It belongs to the MoaC family. Homohexamer; trimer of dimers.

The enzyme catalyses (8S)-3',8-cyclo-7,8-dihydroguanosine 5'-triphosphate = cyclic pyranopterin phosphate + diphosphate. Its pathway is cofactor biosynthesis; molybdopterin biosynthesis. In terms of biological role, catalyzes the conversion of (8S)-3',8-cyclo-7,8-dihydroguanosine 5'-triphosphate to cyclic pyranopterin monophosphate (cPMP). The protein is Cyclic pyranopterin monophosphate synthase of Klebsiella pneumoniae (strain 342).